The chain runs to 363 residues: UDP-N-acetylglucosamine--N-acetylmuramyl-(pentapeptide) pyrophosphoryl-undecaprenol N-acetylglucosamine transferase (363 aa).

Residues 10–12 (TGG), Asn124, Ser195, Ile249, and Gln294 each bind UDP-N-acetyl-alpha-D-glucosamine.

This sequence belongs to the glycosyltransferase 28 family. MurG subfamily.

It is found in the cell membrane. It carries out the reaction Mur2Ac(oyl-L-Ala-gamma-D-Glu-L-Lys-D-Ala-D-Ala)-di-trans,octa-cis-undecaprenyl diphosphate + UDP-N-acetyl-alpha-D-glucosamine = beta-D-GlcNAc-(1-&gt;4)-Mur2Ac(oyl-L-Ala-gamma-D-Glu-L-Lys-D-Ala-D-Ala)-di-trans,octa-cis-undecaprenyl diphosphate + UDP + H(+). Its pathway is cell wall biogenesis; peptidoglycan biosynthesis. In terms of biological role, cell wall formation. Catalyzes the transfer of a GlcNAc subunit on undecaprenyl-pyrophosphoryl-MurNAc-pentapeptide (lipid intermediate I) to form undecaprenyl-pyrophosphoryl-MurNAc-(pentapeptide)GlcNAc (lipid intermediate II). The chain is UDP-N-acetylglucosamine--N-acetylmuramyl-(pentapeptide) pyrophosphoryl-undecaprenol N-acetylglucosamine transferase from Leuconostoc mesenteroides subsp. mesenteroides (strain ATCC 8293 / DSM 20343 / BCRC 11652 / CCM 1803 / JCM 6124 / NCDO 523 / NBRC 100496 / NCIMB 8023 / NCTC 12954 / NRRL B-1118 / 37Y).